The chain runs to 51 residues: Large ribosomal subunit protein eL39 (51 aa).

It belongs to the eukaryotic ribosomal protein eL39 family.

The sequence is that of Large ribosomal subunit protein eL39 from Thermococcus onnurineus (strain NA1).